A 410-amino-acid chain; its full sequence is Peptide chain release factor subunit 1 (410 aa).

The protein belongs to the eukaryotic release factor 1 family. As to quaternary structure, heterodimer of two subunits, one of which binds GTP.

It is found in the cytoplasm. In terms of biological role, directs the termination of nascent peptide synthesis (translation) in response to the termination codons UAA, UAG and UGA. The polypeptide is Peptide chain release factor subunit 1 (Picrophilus torridus (strain ATCC 700027 / DSM 9790 / JCM 10055 / NBRC 100828 / KAW 2/3)).